The chain runs to 784 residues: ATP-dependent 6-phosphofructokinase, platelet type (784 aa).

Methionine 1 is subject to N-acetylmethionine. The segment at 1-399 (MDADDSRAPK…NLNTYKRLAI (399 aa)) is N-terminal catalytic PFK domain 1. A phosphoserine mark is found at serine 6, serine 12, and serine 21. ATP is bound by residues glycine 34, 97 to 98 (RC), and 127 to 130 (GDGS). Position 128 (aspartate 128) interacts with Mg(2+). Phosphoserine is present on serine 142. Residues 173-175 (SID), arginine 210, 217-219 (MGR), glutamate 273, arginine 301, and 307-310 (HVQR) contribute to the substrate site. The active-site Proton acceptor is aspartate 175. Serine 386 carries the post-translational modification Phosphoserine. Lysine 395 carries the post-translational modification N6-acetyllysine. An interdomain linker region spans residues 400–411 (KLPDDQIPKTNC). A C-terminal regulatory PFK domain 2 region spans residues 412-784 (NVAVINVGAP…QLEHVQPWSV (373 aa)). Residue arginine 481 coordinates beta-D-fructose 2,6-bisphosphate. At lysine 486 the chain carries N6-acetyllysine. Beta-D-fructose 2,6-bisphosphate-binding positions include 538 to 542 (TVSNN), arginine 576, 583 to 585 (MGG), and glutamate 639. O-linked (GlcNAc) serine glycosylation occurs at serine 540. Tyrosine 651 carries the phosphotyrosine modification. Residues arginine 665 and 671–674 (HMQQ) each bind beta-D-fructose 2,6-bisphosphate. The residue at position 688 (lysine 688) is an N6-acetyllysine. Arginine 744 is a beta-D-fructose 2,6-bisphosphate binding site. A Phosphoserine modification is found at serine 783.

Belongs to the phosphofructokinase type A (PFKA) family. ATP-dependent PFK group I subfamily. Eukaryotic two domain clade 'E' sub-subfamily. In terms of assembly, homo- and heterotetramers. Phosphofructokinase (PFK) enzyme functions as a tetramer composed of different combinations of 3 types of subunits, called PFKM (where M stands for Muscle), PFKL (Liver) and PFKP (Platelet). The composition of the PFK tetramer differs according to the tissue type it is present in. In muscles, it is composed of 4 PFKM subunits (also called M4). In the liver, the predominant form is a tetramer of PFKL subunits (L4). In erythrocytes, both PFKM and PFKL subunits randomly tetramerize to form M4, L4 and other combinations (ML3, M2L2, M3L). In platelets, brain and fibroblasts, PFK contains a higher proportion of PFKP subunits. The kinetic and regulatory properties of the tetrameric enzyme are dependent on the subunit composition, hence can vary across tissues. Interacts with ATG4B; promoting phosphorylation of ATG4B. The cofactor is Mg(2+). Phosphorylation at Ser-386 promotes interaction with ATG4B. Post-translationally, glcNAcylation decreases enzyme activity.

The protein resides in the cytoplasm. It carries out the reaction beta-D-fructose 6-phosphate + ATP = beta-D-fructose 1,6-bisphosphate + ADP + H(+). It participates in carbohydrate degradation; glycolysis; D-glyceraldehyde 3-phosphate and glycerone phosphate from D-glucose: step 3/4. Its activity is regulated as follows. Allosterically activated by ADP, AMP, or fructose 2,6-bisphosphate, and allosterically inhibited by ATP or citrate. Functionally, catalyzes the phosphorylation of D-fructose 6-phosphate to fructose 1,6-bisphosphate by ATP, the first committing step of glycolysis. This Homo sapiens (Human) protein is ATP-dependent 6-phosphofructokinase, platelet type (PFKP).